The primary structure comprises 417 residues: MLKRDMNIADYDAELWHAMEQEVVRQEEHIELIASENYTSPRVMQAQGSQLTNKYAEGYPGKRYYGGCEYVDVVEQLAIDRAKALFGADYANVQPHSGSQANFAVYTTLLQPGDTVLGMNLAHGGHLTHGSPVNFSGKLYNIVPYGIDESGHIDYDQLAELAKTHQPKMIIGGFSAYSGVVDWARMRQIADSIGAYLFVDMAHVAGLIAAGVYPNPVPHAHVVTTTTHKTLAGPRGGLILAKGGSEELYKKLNSAVFPGAQGGPLMHVIAAKAVALKEAMEPAFKTYQQQVAKNAKAMVEVFLSRGFNVVSGATDNHLFLLDLVDKNLTGKEADAALGRANITVNKNSVPNDPKSPFVTSGMRIGTPAVTRRGFTEADVRDLAGWMCDVLENIHDDAVIERTKNKVLDICDRHPVYA.

Residues Leu-121 and Gly-125 to Leu-127 contribute to the (6S)-5,6,7,8-tetrahydrofolate site. N6-(pyridoxal phosphate)lysine is present on Lys-229. Ser-355 to Phe-357 serves as a coordination point for (6S)-5,6,7,8-tetrahydrofolate.

It belongs to the SHMT family. As to quaternary structure, homodimer. Requires pyridoxal 5'-phosphate as cofactor.

Its subcellular location is the cytoplasm. It catalyses the reaction (6R)-5,10-methylene-5,6,7,8-tetrahydrofolate + glycine + H2O = (6S)-5,6,7,8-tetrahydrofolate + L-serine. It participates in one-carbon metabolism; tetrahydrofolate interconversion. The protein operates within amino-acid biosynthesis; glycine biosynthesis; glycine from L-serine: step 1/1. Catalyzes the reversible interconversion of serine and glycine with tetrahydrofolate (THF) serving as the one-carbon carrier. This reaction serves as the major source of one-carbon groups required for the biosynthesis of purines, thymidylate, methionine, and other important biomolecules. Also exhibits THF-independent aldolase activity toward beta-hydroxyamino acids, producing glycine and aldehydes, via a retro-aldol mechanism. This chain is Serine hydroxymethyltransferase, found in Sodalis glossinidius (strain morsitans).